The following is a 212-amino-acid chain: Tetraspanin-31-A (212 aa).

The Cytoplasmic portion of the chain corresponds to 1–12 (MVCGGFTCSKNA). A helical transmembrane segment spans residues 13 to 33 (LCALNVVYMLVGLLLIGVAAW). Over 34-44 (GKGFGIVSSIH) the chain is Extracellular. A helical membrane pass occupies residues 45–65 (IIGGVIAIGVFLLLIAIIGLI). The Cytoplasmic portion of the chain corresponds to 66 to 72 (GAVSHHQ). A helical membrane pass occupies residues 73 to 93 (VMLFIYMVVLILVFIFQFIVS). Residues 94–175 (CSCLAMNRSQ…MLNHADEALK (82 aa)) are Extracellular-facing. N-linked (GlcNAc...) asparagine glycosylation is found at N100, N109, N117, and N134. The chain crosses the membrane as a helical span at residues 176–196 (ILGGVGLFFSFTEILGVWLAF). The Cytoplasmic portion of the chain corresponds to 197-212 (RFRNQKDPRANPSAFL).

Belongs to the tetraspanin (TM4SF) family.

Its subcellular location is the membrane. The polypeptide is Tetraspanin-31-A (tspan31-a) (Xenopus laevis (African clawed frog)).